We begin with the raw amino-acid sequence, 304 residues long: Acetylglutamate kinase (304 aa).

Substrate-binding positions include 70 to 71 (GG), arginine 92, and asparagine 185.

This sequence belongs to the acetylglutamate kinase family. ArgB subfamily.

Its subcellular location is the cytoplasm. The catalysed reaction is N-acetyl-L-glutamate + ATP = N-acetyl-L-glutamyl 5-phosphate + ADP. It participates in amino-acid biosynthesis; L-arginine biosynthesis; N(2)-acetyl-L-ornithine from L-glutamate: step 2/4. In terms of biological role, catalyzes the ATP-dependent phosphorylation of N-acetyl-L-glutamate. The polypeptide is Acetylglutamate kinase (Paracoccus denitrificans (strain Pd 1222)).